We begin with the raw amino-acid sequence, 400 residues long: Enoyl-[acyl-carrier-protein] reductase [NADH] (400 aa).

NAD(+) contacts are provided by residues 48–53, 74–75, 111–112, and 139–140; these read GSSSGY, FE, DA, and LA. Tyrosine 225 contributes to the substrate binding site. Residue tyrosine 235 is the Proton donor of the active site. Residues lysine 244 and 273-275 contribute to the NAD(+) site; that span reads VVT.

The protein belongs to the TER reductase family. As to quaternary structure, monomer.

The catalysed reaction is a 2,3-saturated acyl-[ACP] + NAD(+) = a (2E)-enoyl-[ACP] + NADH + H(+). It functions in the pathway lipid metabolism; fatty acid biosynthesis. Functionally, involved in the final reduction of the elongation cycle of fatty acid synthesis (FAS II). Catalyzes the reduction of a carbon-carbon double bond in an enoyl moiety that is covalently linked to an acyl carrier protein (ACP). This is Enoyl-[acyl-carrier-protein] reductase [NADH] from Shewanella pealeana (strain ATCC 700345 / ANG-SQ1).